The chain runs to 299 residues: MEELEQGLLMQPWAWLQLAENSLLAKVFITKQGYALLVSDLQQVWHEQVDTSVVSQRAKELNKRLTAPPAAFLCHLDNLLRPLLKDAAHPSEATFSCDCVADALILRVRSELSGLPFYWNFHCMLASPSLVSQHLIRPLMGMSLALQCQVRELATLLHMKDLEIQDYQESGATLIRDRLKTEPFEENSFLEQFMIEKLPEACSIGDGKPFVMNLQDLYMAVTTQEVQVGQKHQGAGDPHTSNSASLQGIDSQCVNQPEQLVSSAPTLSAPEKESTGTSGPLQRPQLSKVKRKKPRGLFS.

The globular head stretch occupies residues 1-135 (MEELEQGLLM…ASPSLVSQHL (135 aa)). Residues 128–170 (PSLVSQHLIRPLMGMSLALQCQVRELATLLHMKDLEIQDYQES) are a coiled coil. Phosphoserine; by PRKDC occurs at positions 132, 203, 245, and 251. Residues 224–288 (QEVQVGQKHQ…GPLQRPQLSK (65 aa)) form a C-terminal tail region. The segment covering 255–266 (NQPEQLVSSAPT) has biased composition (polar residues). Residues 255–299 (NQPEQLVSSAPTLSAPEKESTGTSGPLQRPQLSKVKRKKPRGLFS) form a disordered region. Phosphoserine is present on serine 263. Residue threonine 266 is modified to Phosphothreonine. Serine 287 is modified (phosphoserine). The span at 288–299 (KVKRKKPRGLFS) shows a compositional bias: basic residues. The XLM motif lies at 289-299 (VKRKKPRGLFS).

It belongs to the XRCC4-XLF family. XLF subfamily. As to quaternary structure, homodimer; mainly exists as a homodimer when not associated with XRCC4. Interacts with XRCC4; the interaction is direct and is mediated via a head-to-head interaction between N-terminal head regions. Component of the core long-range non-homologous end joining (NHEJ) complex (also named DNA-PK complex) composed of PRKDC, LIG4, XRCC4, XRCC6/Ku70, XRCC5/Ku86 and NHEJ1/XLF. Additional component of the NHEJ complex includes PAXX. Following autophosphorylation, PRKDC dissociates from DNA, leading to formation of the short-range NHEJ complex, composed of LIG4, XRCC4, XRCC6/Ku70, XRCC5/Ku86 and NHEJ1/XLF. Interacts with POLL (DNA polymerase lambda); promoting POLL recruitment to double-strand breaks (DSBs) and stimulation of the end-filling activity of POLL. In terms of processing, phosphorylated by PRKDC at the C-terminus in response to DNA damage. Phosphorylations by PRKDC at the C-terminus of XRCC4 and NHEJ1/XLF are highly redundant and regulate ability of the XRCC4-NHEJ1/XLF subcomplex to bridge DNA. Phosphorylation does not prevent interaction with XRCC4 but disrupts ability to bridge DNA and promotes detachment from DNA. Ubiquitously expressed.

The protein resides in the nucleus. Its subcellular location is the chromosome. Its function is as follows. DNA repair protein involved in DNA non-homologous end joining (NHEJ); it is required for double-strand break (DSB) repair and V(D)J recombination and is also involved in telomere maintenance. Plays a key role in NHEJ by promoting the ligation of various mismatched and non-cohesive ends. Together with PAXX, collaborates with DNA polymerase lambda (POLL) to promote joining of non-cohesive DNA ends. May act in concert with XRCC5-XRCC6 (Ku) to stimulate XRCC4-mediated joining of blunt ends and several types of mismatched ends that are non-complementary or partially complementary. In some studies, has been shown to associate with XRCC4 to form alternating helical filaments that bridge DNA and act like a bandage, holding together the broken DNA until it is repaired. Alternatively, it has also been shown that rather than forming filaments, a single NHEJ1 dimer interacts through both head domains with XRCC4 to promote the close alignment of DNA ends. The XRCC4-NHEJ1/XLF subcomplex binds to the DNA fragments of a DSB in a highly diffusive manner and robustly bridges two independent DNA molecules, holding the broken DNA fragments in close proximity to one other. The mobility of the bridges ensures that the ends remain accessible for further processing by other repair factors. Binds DNA in a length-dependent manner. The polypeptide is Non-homologous end-joining factor 1 (Homo sapiens (Human)).